The following is a 213-amino-acid chain: UPF0319 protein HAPS_0727 (213 aa).

An N-terminal signal peptide occupies residues 1-21 (MKLGKIALAMTALIAGTTAFA).

This sequence belongs to the UPF0319 family.

The polypeptide is UPF0319 protein HAPS_0727 (Glaesserella parasuis serovar 5 (strain SH0165) (Haemophilus parasuis)).